Consider the following 473-residue polypeptide: H(+)/Cl(-) exchange transporter ClcA (473 aa).

Residues M1–P32 lie on the Cytoplasmic side of the membrane. A helical transmembrane segment spans residues L33–V69. Residues H70 to P76 are Periplasmic-facing. Residues L77–Y100 traverse the membrane as a helical segment. A Selectivity filter part_1 motif is present at residues G106 to P110. Residue S107 participates in chloride binding. An intramembrane region (helical) is located at residues I109–L116. Over E117–R123 the chain is Cytoplasmic. The next 2 helical transmembrane spans lie at W124–G141 and E148–F166. The Selectivity filter part_2 signature appears at G146–P150. Topologically, residues R167–T176 are cytoplasmic. Intramembrane regions (helical) lie at residues L177–A189 and P193–I201. At E202 to S214 the chain is on the cytoplasmic side. The chain crosses the membrane as a helical span at residues I215–F232. The Periplasmic segment spans residues N233–L252. A helical transmembrane segment spans residues W253–H281. At R282–N287 the chain is on the cytoplasmic side. The chain crosses the membrane as a helical span at residues I288–A309. Residues P310 to S329 are Periplasmic-facing. The next 2 helical transmembrane spans lie at M330 to S349 and G355 to V376. The Selectivity filter part_3 signature appears at G355–P359. Positions 356 and 357 each coordinate chloride. Residues E377–A386 lie on the Periplasmic side of the membrane. The segment at residues G387 to S401 is an intramembrane region (helical). Residues I402 to A404 constitute an intramembrane region (note=Loop between two helices). Residues P405 to T416 constitute an intramembrane region (helical). Positions D417–L421 form an intramembrane region, note=Loop between two helices. A helical membrane pass occupies residues I422 to F438. The Cytoplasmic portion of the chain corresponds to T439–T473. Y445 is a binding site for chloride.

Belongs to the chloride channel (TC 2.A.49) family. ClcA subfamily. As to quaternary structure, homodimer.

The protein localises to the cell inner membrane. It carries out the reaction 2 chloride(in) + H(+)(out) = 2 chloride(out) + H(+)(in). In terms of biological role, proton-coupled chloride transporter. Functions as antiport system and exchanges two chloride ions for 1 proton. Probably acts as an electrical shunt for an outwardly-directed proton pump that is linked to amino acid decarboxylation, as part of the extreme acid resistance (XAR) response. The polypeptide is H(+)/Cl(-) exchange transporter ClcA (Shigella flexneri serotype 5b (strain 8401)).